The chain runs to 96 residues: Co-chaperonin GroES (96 aa).

This sequence belongs to the GroES chaperonin family. In terms of assembly, heptamer of 7 subunits arranged in a ring. Interacts with the chaperonin GroEL.

The protein resides in the cytoplasm. Together with the chaperonin GroEL, plays an essential role in assisting protein folding. The GroEL-GroES system forms a nano-cage that allows encapsulation of the non-native substrate proteins and provides a physical environment optimized to promote and accelerate protein folding. GroES binds to the apical surface of the GroEL ring, thereby capping the opening of the GroEL channel. This chain is Co-chaperonin GroES, found in Idiomarina loihiensis (strain ATCC BAA-735 / DSM 15497 / L2-TR).